The following is a 521-amino-acid chain: Protein TESPA1 (521 aa).

Serine 311 carries the phosphoserine modification. Polar residues predominate over residues 331-341; that stretch reads QQDSDLGQFSQ. 2 disordered regions span residues 331-351 and 461-521; these read QQDSDLGQFSQEDPVPPAEGK and QQKW…GKDS. The span at 466–475 shows a compositional bias: basic and acidic residues; sequence QSVDRPELRR. Positions 485–498 are enriched in acidic residues; the sequence is FDLEEVQSNSEEEQ. Residues 505–514 are compositionally biased toward basic residues; that stretch reads SRPRHPHHHQ.

In terms of assembly, interacts with PLCG1 and GRB2; the association is increased with prolonged stimulation of the TCR and may facilitate the assembly of the LAT signalosome. Interacts with ITPR1. Also interacts with ITPR3. Interacts with HSPA9. Post-translationally, may be phosphorylated in response to store-operated Ca(+2) entry.

Its subcellular location is the cytoplasm. The protein resides in the endoplasmic reticulum membrane. Functionally, required for the development and maturation of T-cells, its function being essential for the late stages of thymocyte development. Plays a role in T-cell antigen receptor (TCR)-mediated activation of the ERK and NFAT signaling pathways, possibly by serving as a scaffolding protein that promotes the assembly of the LAT signalosome in thymocytes. May play a role in the regulation of inositol 1,4,5-trisphosphate receptor-mediated Ca(2+) release and mitochondrial Ca(2+) uptake via the mitochondria-associated endoplasmic reticulum membrane (MAM) compartment. This is Protein TESPA1 (TESPA1) from Homo sapiens (Human).